A 340-amino-acid chain; its full sequence is Phenylalanine--tRNA ligase alpha subunit (340 aa).

Residue glutamate 255 participates in Mg(2+) binding.

The protein belongs to the class-II aminoacyl-tRNA synthetase family. Phe-tRNA synthetase alpha subunit type 1 subfamily. In terms of assembly, tetramer of two alpha and two beta subunits. It depends on Mg(2+) as a cofactor.

It is found in the cytoplasm. The enzyme catalyses tRNA(Phe) + L-phenylalanine + ATP = L-phenylalanyl-tRNA(Phe) + AMP + diphosphate + H(+). The protein is Phenylalanine--tRNA ligase alpha subunit of Desulfitobacterium hafniense (strain DSM 10664 / DCB-2).